A 286-amino-acid polypeptide reads, in one-letter code: 2-hydroxy-6-oxononadienedioate/2-hydroxy-6-oxononatrienedioate hydrolase (286 aa).

The AB hydrolase-1 domain maps to 36–271; sequence VIMLHGGGPG…RCGHWAQWEH (236 aa). His-265 acts as the Proton acceptor in catalysis.

The protein belongs to the AB hydrolase superfamily. BphD family. As to quaternary structure, homodimer.

It catalyses the reaction (2Z,4E)-2-hydroxy-6-oxonona-2,4-dienedioate + H2O = (2Z)-2-hydroxypenta-2,4-dienoate + succinate + H(+). The enzyme catalyses (2Z,4E,7E)-2-hydroxy-6-oxonona-2,4,7-trienedioate + H2O = (2Z)-2-hydroxypenta-2,4-dienoate + fumarate + H(+). It participates in aromatic compound metabolism; 3-phenylpropanoate degradation. Its function is as follows. Catalyzes the cleavage of the C5-C6 bond of 2-hydroxy-6-oxononadienedioate, and probably also 2-hydroxy-6-oxononatrienedioate, a dienol ring fission product of the bacterial meta-cleavage pathway for degradation of phenylpropionic acid. This is 2-hydroxy-6-oxononadienedioate/2-hydroxy-6-oxononatrienedioate hydrolase (mhpC) from Comamonas testosteroni (Pseudomonas testosteroni).